A 231-amino-acid chain; its full sequence is Ion-translocating oxidoreductase complex subunit E (231 aa).

The next 6 membrane-spanning stretches (helical) occupy residues alanine 18–alanine 38, leucine 39–leucine 59, threonine 63–valine 83, leucine 86–valine 106, alanine 125–leucine 145, and proline 182–glycine 202.

The protein belongs to the NqrDE/RnfAE family. The complex is composed of six subunits: RsxA, RsxB, RsxC, RsxD, RsxE and RsxG.

The protein localises to the cell inner membrane. Its function is as follows. Part of a membrane-bound complex that couples electron transfer with translocation of ions across the membrane. Required to maintain the reduced state of SoxR. The sequence is that of Ion-translocating oxidoreductase complex subunit E from Escherichia coli (strain ATCC 8739 / DSM 1576 / NBRC 3972 / NCIMB 8545 / WDCM 00012 / Crooks).